Consider the following 203-residue polypeptide: ATP-dependent Clp protease proteolytic subunit (203 aa).

The active-site Nucleophile is the Ser107. The active site involves His132.

It belongs to the peptidase S14 family. Fourteen ClpP subunits assemble into 2 heptameric rings which stack back to back to give a disk-like structure with a central cavity, resembling the structure of eukaryotic proteasomes.

The protein localises to the cytoplasm. The enzyme catalyses Hydrolysis of proteins to small peptides in the presence of ATP and magnesium. alpha-casein is the usual test substrate. In the absence of ATP, only oligopeptides shorter than five residues are hydrolyzed (such as succinyl-Leu-Tyr-|-NHMec, and Leu-Tyr-Leu-|-Tyr-Trp, in which cleavage of the -Tyr-|-Leu- and -Tyr-|-Trp bonds also occurs).. Functionally, cleaves peptides in various proteins in a process that requires ATP hydrolysis. Has a chymotrypsin-like activity. Plays a major role in the degradation of misfolded proteins. This Shewanella woodyi (strain ATCC 51908 / MS32) protein is ATP-dependent Clp protease proteolytic subunit.